A 529-amino-acid chain; its full sequence is ATP synthase F(1) complex subunit beta, mitochondrial (529 aa).

Residues 1 to 47 constitute a mitochondrion transit peptide; the sequence is MLGFVGRVAAAPASGALRRLTPSASLPPAQLLLRAAPTAVHPVRDYA. The O-linked (GlcNAc) serine glycan is linked to Ser106. Lys124, Lys133, and Lys161 each carry N6-acetyllysine; alternate. An N6-succinyllysine; alternate mark is found at Lys124, Lys133, and Lys161. At Lys198 the chain carries N6-acetyllysine. Residues Gly209, Val210, Gly211, Lys212, Thr213, and Val214 each contribute to the ADP site. Gly209 contacts ATP. Phosphate contacts are provided by Gly209, Val210, Gly211, Lys212, and Thr213. 4 residues coordinate ATP: Gly211, Lys212, Thr213, and Val214. Thr213 is a binding site for Mg(2+). Residue Glu238 coordinates Mg(2+). Residue Arg239 coordinates ATP. Lys259 and Lys264 each carry N6-acetyllysine; alternate. An N6-succinyllysine; alternate mark is found at Lys259 and Lys264. A Phosphothreonine modification is found at Thr312. Ser415 is subject to Phosphoserine. N6-acetyllysine is present on Lys426. Residue Ser433 is modified to Phosphoserine. 2 positions are modified to N6-acetyllysine: Lys480 and Lys485. Lys522 bears the N6-acetyllysine; alternate mark. N6-succinyllysine; alternate is present on Lys522. A Phosphoserine modification is found at Ser529.

The protein belongs to the ATPase alpha/beta chains family. As to quaternary structure, homotrimer. Component of the ATP synthase complex composed at least of ATP5F1A/subunit alpha, ATP5F1B/subunit beta, ATP5MC1/subunit c (homooctomer), MT-ATP6/subunit a, MT-ATP8/subunit 8, ATP5ME/subunit e, ATP5MF/subunit f, ATP5MG/subunit g, ATP5MK/subunit k, ATP5MJ/subunit j, ATP5F1C/subunit gamma, ATP5F1D/subunit delta, ATP5F1E/subunit epsilon, ATP5PF/subunit F6, ATP5PB/subunit b, ATP5PD/subunit d, ATP5PO/subunit OSCP. ATP synthase complex consists of a soluble F(1) head domain (subunits alpha(3) and beta(3)) - the catalytic core - and a membrane F(0) domain - the membrane proton channel (subunits c, a, 8, e, f, g, k and j). These two domains are linked by a central stalk (subunits gamma, delta, and epsilon) rotating inside the F1 region and a stationary peripheral stalk (subunits F6, b, d, and OSCP). Interacts with PPIF. Interacts with BCL2L1 isoform BCL-X(L); the interaction mediates the association of BCL2L1 isoform BCL-X(L) with the mitochondrial membrane F(1)F(0) ATP synthase and enhances neurons metabolic efficiency. Interacts with CLN5 and PPT1. Interacts with S100A1; this interaction increases F1-ATPase activity. Interacts with MTLN. Interacts with TTC5/STRAP; the interaction results in decreased mitochondrial ATP production. It depends on Mg(2+) as a cofactor.

The protein localises to the mitochondrion inner membrane. The catalysed reaction is ATP + H2O + 4 H(+)(in) = ADP + phosphate + 5 H(+)(out). Catalytic subunit beta, of the mitochondrial membrane ATP synthase complex (F(1)F(0) ATP synthase or Complex V) that produces ATP from ADP in the presence of a proton gradient across the membrane which is generated by electron transport complexes of the respiratory chain. ATP synthase complex consist of a soluble F(1) head domain - the catalytic core - and a membrane F(1) domain - the membrane proton channel. These two domains are linked by a central stalk rotating inside the F(1) region and a stationary peripheral stalk. During catalysis, ATP synthesis in the catalytic domain of F(1) is coupled via a rotary mechanism of the central stalk subunits to proton translocation. In vivo, can only synthesize ATP although its ATP hydrolase activity can be activated artificially in vitro. With the subunit alpha (ATP5F1A), forms the catalytic core in the F(1) domain. The polypeptide is ATP synthase F(1) complex subunit beta, mitochondrial (Homo sapiens (Human)).